Consider the following 426-residue polypeptide: Glutamate-1-semialdehyde 2,1-aminomutase (426 aa).

Lys265 is subject to N6-(pyridoxal phosphate)lysine.

This sequence belongs to the class-III pyridoxal-phosphate-dependent aminotransferase family. HemL subfamily. As to quaternary structure, homodimer. Requires pyridoxal 5'-phosphate as cofactor.

The protein localises to the cytoplasm. The catalysed reaction is (S)-4-amino-5-oxopentanoate = 5-aminolevulinate. The protein operates within porphyrin-containing compound metabolism; protoporphyrin-IX biosynthesis; 5-aminolevulinate from L-glutamyl-tRNA(Glu): step 2/2. The chain is Glutamate-1-semialdehyde 2,1-aminomutase from Hahella chejuensis (strain KCTC 2396).